A 213-amino-acid chain; its full sequence is uncharacterized protein (213 aa).

The segment covering 1 to 14 has biased composition (polar residues); the sequence is MSSDVLVTTPAQRQ. Positions 1–26 are disordered; the sequence is MSSDVLVTTPAQRQTEPHAEAVSRNR. Positions 29–89 constitute an HTH tetR-type domain; sequence QATFRKVLAA…EVYLDLVRQV (61 aa).

This is an uncharacterized protein from Mycobacterium tuberculosis (strain CDC 1551 / Oshkosh).